A 400-amino-acid polypeptide reads, in one-letter code: Enoyl-[acyl-carrier-protein] reductase [NADH] (400 aa).

NAD(+) is bound by residues 48–53, 74–75, 111–112, and 139–140; these read GASTGY, FE, DA, and LA. Y225 lines the substrate pocket. Y235 serves as the catalytic Proton donor. NAD(+)-binding positions include K244 and 273 to 275; that span reads VVT.

Belongs to the TER reductase family. In terms of assembly, monomer.

It carries out the reaction a 2,3-saturated acyl-[ACP] + NAD(+) = a (2E)-enoyl-[ACP] + NADH + H(+). It functions in the pathway lipid metabolism; fatty acid biosynthesis. Functionally, involved in the final reduction of the elongation cycle of fatty acid synthesis (FAS II). Catalyzes the reduction of a carbon-carbon double bond in an enoyl moiety that is covalently linked to an acyl carrier protein (ACP). The protein is Enoyl-[acyl-carrier-protein] reductase [NADH] of Burkholderia cenocepacia (strain ATCC BAA-245 / DSM 16553 / LMG 16656 / NCTC 13227 / J2315 / CF5610) (Burkholderia cepacia (strain J2315)).